The sequence spans 459 residues: Protein maelstrom (459 aa).

The segment at residues 2-69 (APKKHSGFMM…AQRAKRESSN (68 aa)) is a DNA-binding region (HMG box). Residues 43–78 (NTQQRGPYNSGGKDANVAQRAKRESSNGHGQVDKAQ) are disordered. Basic and acidic residues predominate over residues 63–78 (AKRESSNGHGQVDKAQ).

It belongs to the maelstrom family. As to expression, in germaria and egg chambers, it is detected in the germline. In the germarium, it is in all regions, including region I where the germ cells are dividing. In early egg chambers, it is uniformly distributed throughout the nurse cells and oocyte but, by stage 5, it is most concentrated around the outer margins of the cells, closest to the periphery of the egg chamber. Level decreases in stages 5 and 6, but most noticeably in the oocyte, where protein level remains. No detectable protein from stage 8 onward (at protein level).

The protein localises to the cytoplasm. Its subcellular location is the nucleus. It localises to the perinuclear region. The protein resides in the cytoplasmic ribonucleoprotein granule. Its function is as follows. Involved both in the piRNA and miRNA metabolic processes. As a component of the meiotic nuage, plays a central role during oogenesis by repressing transposable elements and preventing their mobilization, which is essential for the germline integrity. Repression of transposable elements is mediated via the piRNA metabolic process, which mediates the repression of transposable elements during meiosis by forming complexes composed of piRNAs and Piwi proteins and governs the repression of transposons. As a nuclear component, it is required for proper differentiation in the germline stem cell (GSC) lineage by repressing microRNA-7 (miR-7), thereby acting as an indirect regulator of bag-of-marbles (Bam). Acts by binding to the promoter of miR-7 gene and repressing its expression; miR-7 repression alleviates the Bam repression by miR-7, thereby allowing differentiation in the germline stem cell (GSC) lineage. Indirectly required to position the microtubule organizing center in stage 2-6 oocytes. Involved in repression of long interspersed nuclear elements (LINEs) including HeT-A, I-element, TART and possibly mst40 LINEs; may have a role in production of piwi-interacting RNA (piRNA). The sequence is that of Protein maelstrom from Drosophila melanogaster (Fruit fly).